Reading from the N-terminus, the 226-residue chain is Ribonuclease 3 (226 aa).

Positions 7–129 constitute an RNase III domain; sequence LPRLCRTLGY…IIGAIYLDSD (123 aa). Mg(2+) is bound at residue E42. The active site involves D46. Residues D115 and E118 each coordinate Mg(2+). E118 is a catalytic residue. Residues 156–226 enclose the DRBM domain; that stretch reads DAKTLLQEYL…AAQVLELLKK (71 aa).

Belongs to the ribonuclease III family. In terms of assembly, homodimer. Requires Mg(2+) as cofactor.

It is found in the cytoplasm. The enzyme catalyses Endonucleolytic cleavage to 5'-phosphomonoester.. Its function is as follows. Digests double-stranded RNA. Involved in the processing of primary rRNA transcript to yield the immediate precursors to the large and small rRNAs (23S and 16S). Processes some mRNAs, and tRNAs when they are encoded in the rRNA operon. Processes pre-crRNA and tracrRNA of type II CRISPR loci if present in the organism. The protein is Ribonuclease 3 of Shewanella sp. (strain ANA-3).